A 422-amino-acid chain; its full sequence is MTVKTTVSTKDIDEAFLRLKDIVKETPLQLDHYLSQKYDCKVYLKREDLQWVRSFKLRGAYNAISVLSDEAKSKGITCASAGNHAQGVAYTAKKLNLNAVIFMPVTTPLQKVNQVKFFGNSNVEVVLTGDTFDHCLAEALTYTSEHQMNFIDPFNNVHTISGQGTLAKEMLEQSKTDNVNFDYLFAAIGGGGLISGISTYFKTYSPTTKIIGVEPSGASSMYESVVVNNQVVTLPNIDKFVDGASVARVGDITFEIAKENVDDYVQVDEGAVCSTILDMYSKQAIVAEPAGALSVSALENYKDHIMGKTVVCVISGGNNDINRMKEIEERSLLYEEMKHYFILNFPQRPGALREFVNDVLGPQDDITKFEYLKKSSQNTGTVIIGIQLKDHDDLIQLKQRVNHFDPSNIYINENKMLYSLLI.

An N6-(pyridoxal phosphate)lysine modification is found at lysine 56. Pyridoxal 5'-phosphate-binding positions include asparagine 83, 189–193 (GGGGL), and serine 315. The ACT-like domain maps to 339 to 413 (HYFILNFPQR…FDPSNIYINE (75 aa)).

The protein belongs to the serine/threonine dehydratase family. Homotetramer. The cofactor is pyridoxal 5'-phosphate.

It carries out the reaction L-threonine = 2-oxobutanoate + NH4(+). It participates in amino-acid biosynthesis; L-isoleucine biosynthesis; 2-oxobutanoate from L-threonine: step 1/1. Functionally, catalyzes the anaerobic formation of alpha-ketobutyrate and ammonia from threonine in a two-step reaction. The first step involved a dehydration of threonine and a production of enamine intermediates (aminocrotonate), which tautomerizes to its imine form (iminobutyrate). Both intermediates are unstable and short-lived. The second step is the nonenzymatic hydrolysis of the enamine/imine intermediates to form 2-ketobutyrate and free ammonia. In the low water environment of the cell, the second step is accelerated by RidA. This Staphylococcus aureus (strain Mu50 / ATCC 700699) protein is L-threonine dehydratase biosynthetic IlvA (ilvA).